The chain runs to 651 residues: DNA mismatch repair protein MutL (651 aa).

The disordered stretch occupies residues 383–405 (TAAEEPTPAPTSPDLEIGDLDDQ).

The protein belongs to the DNA mismatch repair MutL/HexB family.

Functionally, this protein is involved in the repair of mismatches in DNA. It is required for dam-dependent methyl-directed DNA mismatch repair. May act as a 'molecular matchmaker', a protein that promotes the formation of a stable complex between two or more DNA-binding proteins in an ATP-dependent manner without itself being part of a final effector complex. The protein is DNA mismatch repair protein MutL of Lacticaseibacillus paracasei (strain ATCC 334 / BCRC 17002 / CCUG 31169 / CIP 107868 / KCTC 3260 / NRRL B-441) (Lactobacillus paracasei).